The following is a 266-amino-acid chain: Vesicle-associated protein 4-1 (266 aa).

The interval 28 to 57 is disordered; that stretch reads STTSSSSTQNPNQNYRSRHGNRNTDISAVS. In terms of domain architecture, MSP spans 76-199; the sequence is RLRLDPSSYL…VEQVLRVIFI (124 aa). A coiled-coil region spans residues 200 to 228; the sequence is DADRPSAALEKLKRQLDEAEAAVEARKKP. Basic and acidic residues predominate over residues 219–229; it reads EAAVEARKKPP. Positions 219–239 are disordered; it reads EAAVEARKKPPPETGPRVVGE. Ser-264 bears the Phosphoserine mark.

It belongs to the VAMP-associated protein (VAP) (TC 9.B.17) family.

Its function is as follows. May play a role in vesicle trafficking. This Arabidopsis thaliana (Mouse-ear cress) protein is Vesicle-associated protein 4-1 (PVA41).